The sequence spans 56 residues: Cecropin-A2 (56 aa).

Arg55 carries the post-translational modification Arginine amide.

It belongs to the cecropin family.

It localises to the secreted. In terms of biological role, cecropins have lytic and antibacterial activity against several Gram-positive and Gram-negative bacteria. This chain is Cecropin-A2 (CecA2), found in Drosophila yakuba (Fruit fly).